Reading from the N-terminus, the 130-residue chain is Small ribosomal subunit protein uS4 (130 aa).

K64 is subject to N6-acetyllysine. K91 participates in a covalent cross-link: Glycyl lysine isopeptide (Lys-Gly) (interchain with G-Cter in SUMO2). The S4 RNA-binding domain occupies R106–Q130. K114 is modified (N6-acetyllysine).

It belongs to the universal ribosomal protein uS4 family. In terms of assembly, component of the small ribosomal subunit. Identified in a IGF2BP1-dependent mRNP granule complex containing untranslated mRNAs. Part of the small subunit (SSU) processome, composed of more than 70 proteins and the RNA chaperone small nucleolar RNA (snoRNA) U3.

The protein resides in the cytoplasm. It localises to the nucleus. It is found in the nucleolus. Component of the small ribosomal subunit. The ribosome is a large ribonucleoprotein complex responsible for the synthesis of proteins in the cell. Part of the small subunit (SSU) processome, first precursor of the small eukaryotic ribosomal subunit. During the assembly of the SSU processome in the nucleolus, many ribosome biogenesis factors, an RNA chaperone and ribosomal proteins associate with the nascent pre-rRNA and work in concert to generate RNA folding, modifications, rearrangements and cleavage as well as targeted degradation of pre-ribosomal RNA by the RNA exosome. The sequence is that of Small ribosomal subunit protein uS4 (RPS9) from Sus scrofa (Pig).